The following is a 270-amino-acid chain: Glucosamine-6-phosphate deaminase (270 aa).

Asp72 acts as the Proton acceptor; for enolization step in catalysis. Asp141 (for ring-opening step) is an active-site residue. The active-site Proton acceptor; for ring-opening step is the His143. Glu148 functions as the For ring-opening step in the catalytic mechanism.

Belongs to the glucosamine/galactosamine-6-phosphate isomerase family. NagB subfamily. In terms of assembly, homohexamer.

It carries out the reaction alpha-D-glucosamine 6-phosphate + H2O = beta-D-fructose 6-phosphate + NH4(+). It participates in amino-sugar metabolism; N-acetylneuraminate degradation; D-fructose 6-phosphate from N-acetylneuraminate: step 5/5. Its activity is regulated as follows. Allosterically activated by N-acetylglucosamine 6-phosphate (GlcNAc6P). Functionally, catalyzes the reversible isomerization-deamination of glucosamine 6-phosphate (GlcN6P) to form fructose 6-phosphate (Fru6P) and ammonium ion. The sequence is that of Glucosamine-6-phosphate deaminase from Haemophilus influenzae (strain PittEE).